A 452-amino-acid polypeptide reads, in one-letter code: Retrograde protein of 51 kDa (452 aa).

The segment covering 1–13 (MQKGAKIEDEGRQ) has biased composition (basic and acidic residues). Residues 1-50 (MQKGAKIEDEGRQSRIQSRNFIIQRSDPRTRGSSVYSSRSSSYNVRSSIS) are disordered. The head stretch occupies residues 1–75 (MQKGAKIEDE…KGNREKEKRE (75 aa)). Positions 14-23 (SRIQSRNFII) are enriched in polar residues. Low complexity predominate over residues 33 to 50 (SSVYSSRSSSYNVRSSIS). Residues 72-424 (EKREMQNLNE…KLLEGEESRV (353 aa)) form the IF rod domain. Positions 76–111 (MQNLNERLASYIEKVHFLDAQVKKLEAENEALRNRK) are coil 1A. The interval 112-121 (VEDLQPIRDA) is linker 1. Residues 122 to 259 (YENELRQARK…DLLDQLELLK (138 aa)) are coil 1B. Ser-156 is subject to Sulfoserine. The linker 12 stretch occupies residues 260–278 (PEPIQIKGMDYADFWKSEL). A coil 2 region spans residues 279–424 (AKCVREINLA…KLLEGEESRV (146 aa)). Residues 425–452 (GLRTLVEQAIGTQSKGSASLKDAIQSSS) form a tail region.

The protein belongs to the intermediate filament family.

The chain is Retrograde protein of 51 kDa (RGP51) from Lymnaea stagnalis (Great pond snail).